A 557-amino-acid polypeptide reads, in one-letter code: Formate--tetrahydrofolate ligase (557 aa).

65-72 (TPAGEGKT) provides a ligand contact to ATP.

The protein belongs to the formate--tetrahydrofolate ligase family.

It catalyses the reaction (6S)-5,6,7,8-tetrahydrofolate + formate + ATP = (6R)-10-formyltetrahydrofolate + ADP + phosphate. It functions in the pathway one-carbon metabolism; tetrahydrofolate interconversion. The sequence is that of Formate--tetrahydrofolate ligase from Acidiphilium cryptum (strain JF-5).